A 493-amino-acid polypeptide reads, in one-letter code: E3 ubiquitin-protein ligase TRIM35 (493 aa).

Residue Met1 is modified to N-acetylmethionine. A phosphoserine mark is found at Ser4 and Ser8. An RING-type zinc finger spans residues 21–61 (CAVCYDPFRDAVTLRCGHNFCRGCVSRCWEVQVSPTCPVCK). A B box-type zinc finger spans residues 96-137 (RFSRVCRLHRGQLSLFCLEDKELLCCSCQADPRHQGHRVQPV). Residues Cys101, His104, Cys123, and His129 each contribute to the Zn(2+) site. A coiled-coil region spans residues 210–251 (AEETRQKQLLADEKMKQLTEETEVLAHEIERLQMEMKEDDVS). Residues 284-487 (LGSLQYRVWK…LRICPLHISV (204 aa)) enclose the B30.2/SPRY domain.

The protein belongs to the TRIM/RBCC family. In terms of assembly, interacts with PKM isoform M2, but not isoform M1; this interaction may compete with that between PKM and FGFR1, and hence reduces FGFR1-dependent tyrosine phosphorylation of PKM. Interacts with IRF7; this interaction promotes IRF7 proteasomal degradation. Interacts with TRAF3; this interaction promotes TRAF3 activation.

It is found in the cytoplasm. Its subcellular location is the nucleus. It carries out the reaction S-ubiquitinyl-[E2 ubiquitin-conjugating enzyme]-L-cysteine + [acceptor protein]-L-lysine = [E2 ubiquitin-conjugating enzyme]-L-cysteine + N(6)-ubiquitinyl-[acceptor protein]-L-lysine.. The protein operates within protein modification; protein ubiquitination. In terms of biological role, E3 ubiquitin-protein ligase that participates in multiple biological processes including cell death, glucose metabolism, and in particular, the innate immune response. Mediates 'Lys-63'-linked polyubiquitination of TRAF3 thereby promoting type I interferon production via RIG-I signaling pathway. Can also catalyze 'Lys-48'-linked polyubiquitination and proteasomal degradation of viral proteins such as influenza virus PB2. Acts as a negative feedback regulator of TLR7- and TLR9-triggered signaling. Mechanistically, promotes the 'Lys-48'-linked ubiquitination of IRF7 and induces its degradation via a proteasome-dependent pathway. Reduces FGFR1-dependent tyrosine phosphorylation of PKM, inhibiting PKM-dependent lactate production, glucose metabolism, and cell growth. This is E3 ubiquitin-protein ligase TRIM35 (TRIM35) from Homo sapiens (Human).